The following is a 315-amino-acid chain: Deoxyhypusine hydroxylase (315 aa).

HEAT-like PBS-type repeat units lie at residues 23-52, 56-82, 89-115, 179-205, 211-237, and 244-270; these read IAKR…LNDK, LRHE…LVKN, VRHE…YSND, NRYR…GLKD, LRHE…CVLD, and VRHE…LLQD. Positions 58, 91, and 92 each coordinate Fe cation. Fe cation-binding residues include histidine 213, histidine 246, and glutamate 247.

The protein belongs to the deoxyhypusine hydroxylase family. It depends on Fe(2+) as a cofactor.

The catalysed reaction is [eIF5A protein]-deoxyhypusine + AH2 + O2 = [eIF5A protein]-hypusine + A + H2O. Its pathway is protein modification; eIF5A hypusination. In terms of biological role, catalyzes the hydroxylation of the N(6)-(4-aminobutyl)-L-lysine intermediate produced by deoxyhypusine synthase/DHPS on a critical lysine of the eukaryotic translation initiation factor 5A/eIF-5A. This is the second step of the post-translational modification of that lysine into an unusual amino acid residue named hypusine. Hypusination is unique to mature eIF-5A factor and is essential for its function. In Dictyostelium discoideum (Social amoeba), this protein is Deoxyhypusine hydroxylase (dohh-1).